The sequence spans 69 residues: Iota-conotoxin LtIIIA (69 aa).

A signal peptide spans 1-20 (MLKMGVLLFTFLVLFPLTTL). A propeptide spanning residues 21 to 52 (ELDTDRPVERHAAIKQDLKPQERRGIRLHAPR) is cleaved from the precursor. 2 positions are modified to 4-carboxyglutamate: Glu54 and Glu57. Cystine bridges form between Cys55-Cys67, Cys56-Cys65, and Cys61-Cys68. Pro58 is subject to 4-hydroxyproline.

In terms of tissue distribution, expressed by the venom duct.

The protein resides in the secreted. Functionally, iota-conotoxins bind to voltage-gated sodium channels and act as agonists by shifting the voltage-dependence of activation to more hyperpolarized levels. This toxin enhances tetrodotoxin-sensitive sodium current in rat dorsal root ganglion neurons. This chain is Iota-conotoxin LtIIIA, found in Conus litteratus (Lettered cone).